The chain runs to 467 residues: tRNA dimethylallyltransferase (467 aa).

A mitochondrion-targeting transit peptide spans 1–47 (MASVAAARAVPVGSGLRGLQRTLPLVVILGATGTGKSTLALQLGQRL). A dimethylallyl diphosphate-binding site is contributed by 32–37 (TGTGKS). Interaction with substrate tRNA stretches follow at residues 55-58 (DSMQ) and 183-187 (RKVAR). Residues 221 to 230 (FSNPCILWLH) are core aggregation region. The tract at residues 233 to 255 (QAVLDERLDKRVDDMLAAGLLEE) is interaction with isopentenylpyrophosphate transferase. Interaction with substrate tRNA regions lie at residues 281-283 (QSI) and 313-331 (ALKQ…WVKN). A Matrin-type zinc finger spans residues 395–425 (HLCDLCDRIIIGDREWAAHIKSKSHLNQLKK). Residues 429–467 (LDSDAVNTIESQSVSPDHNKEPKEKGSPGQNDQELKCSV) are disordered. Over residues 433–444 (AVNTIESQSVSP) the composition is skewed to polar residues. Ser-443 bears the Phosphoserine mark. The segment covering 445–454 (DHNKEPKEKG) has biased composition (basic and acidic residues). Position 455 is a phosphoserine (Ser-455).

The protein belongs to the IPP transferase family.

The protein localises to the mitochondrion. It is found in the cytoplasm. The catalysed reaction is adenosine(37) in tRNA + dimethylallyl diphosphate = N(6)-dimethylallyladenosine(37) in tRNA + diphosphate. In terms of biological role, catalyzes the transfer of a dimethylallyl group onto the adenine at position 37 of both cytosolic and mitochondrial tRNAs, leading to the formation of N6-(dimethylallyl)adenosine (i6A37). Mediates modification of a limited subset of tRNAs: tRNA(Ser)(AGA), tRNA(Ser)(CGA), tRNA(Ser)(UGA), as well as partial modification of the selenocysteine tRNA(Ser)(UCA). TRIT1 is therefore required for selenoprotein expression. The chain is tRNA dimethylallyltransferase (TRIT1) from Homo sapiens (Human).